The primary structure comprises 450 residues: MYTKDTIVAIATPQGNGGIGIIRISGIDALAIAEKLTKKQLKPRYATFCNVYNDNEIIDHGIVIFFKAPLSYTGEDVVEIQAHGNPFILNLIIKAALNCGARMAKAGEFTERAFLNNKLDLTQAEAVADIINASSEIAAKSAAKSLQGDFSKEINNLLEKLIYLRMYVEASIDFPEEEINFLEDQKIHSSLEEIYKVILAVKNSCKQGVILAEGITLILVGKPNAGKSSLLNALAGKESAIVTSIAGTTRDIVKEHIQINGVPMHIIDTAGLRNSDDIIESEGIKRAIKKIQEADQVLFVTDDYTNSQVKFSDIKEIIPEFYDQIPKDIDITYVHNKIDLLKEVPHNHANHIYISAENNIGIDKLKEHILNKVGYTNQNESIYTARERHVTAINNAFEHIKLAKEQLELGNGELLAEELLIVQEYLNSITGEFSSDDLLGEIFSSFCIGK.

Positions 23, 79, and 118 each coordinate (6S)-5-formyl-5,6,7,8-tetrahydrofolate. Residues 214–374 form the TrmE-type G domain; it reads GITLILVGKP…LKEHILNKVG (161 aa). K(+) is bound at residue Asn-224. GTP-binding positions include 224–229, 243–249, and 268–271; these read NAGKSS, TSIAGTT, and DTAG. Ser-228 provides a ligand contact to Mg(2+). K(+) is bound by residues Thr-243, Ile-245, and Thr-248. Residue Thr-249 participates in Mg(2+) binding. (6S)-5-formyl-5,6,7,8-tetrahydrofolate is bound at residue Lys-450.

Belongs to the TRAFAC class TrmE-Era-EngA-EngB-Septin-like GTPase superfamily. TrmE GTPase family. In terms of assembly, homodimer. Heterotetramer of two MnmE and two MnmG subunits. It depends on K(+) as a cofactor.

The protein resides in the cytoplasm. In terms of biological role, exhibits a very high intrinsic GTPase hydrolysis rate. Involved in the addition of a carboxymethylaminomethyl (cmnm) group at the wobble position (U34) of certain tRNAs, forming tRNA-cmnm(5)s(2)U34. The polypeptide is tRNA modification GTPase MnmE (Francisella tularensis subsp. novicida (strain U112)).